A 305-amino-acid chain; its full sequence is Protoheme IX farnesyltransferase (305 aa).

The next 9 helical transmembrane spans lie at 26-46 (VMSL…QPVN), 47-67 (PFVA…SGAL), 98-118 (LAVG…AANW), 119-139 (FAAG…TIWL), 147-167 (IVIG…CATG), 174-194 (LLMF…LALF), 220-240 (IFAY…TSVG), 243-263 (LYLA…WQIL), and 284-304 (LSLY…WVGG).

This sequence belongs to the UbiA prenyltransferase family. Protoheme IX farnesyltransferase subfamily. As to quaternary structure, interacts with CtaA.

The protein resides in the cell inner membrane. It catalyses the reaction heme b + (2E,6E)-farnesyl diphosphate + H2O = Fe(II)-heme o + diphosphate. Its pathway is porphyrin-containing compound metabolism; heme O biosynthesis; heme O from protoheme: step 1/1. Converts heme B (protoheme IX) to heme O by substitution of the vinyl group on carbon 2 of heme B porphyrin ring with a hydroxyethyl farnesyl side group. The protein is Protoheme IX farnesyltransferase of Paracoccus denitrificans (strain Pd 1222).